Consider the following 248-residue polypeptide: Small ribosomal subunit protein eS6 (248 aa).

The disordered stretch occupies residues 215–248 (VQRKKESKAKREEAKRRRSASIRESKSSVSSDKK). Over residues 223–248 (AKREEAKRRRSASIRESKSSVSSDKK) the composition is skewed to basic and acidic residues. A phosphoserine mark is found at Ser-233, Ser-235, Ser-239, Ser-242, Ser-244, and Ser-245.

This sequence belongs to the eukaryotic ribosomal protein eS6 family. In terms of assembly, component of the small ribosomal subunit. Part of the small subunit (SSU) processome, composed of more than 70 proteins and the RNA chaperone small nucleolar RNA (snoRNA) U3. Ribosomal protein S6 is the major substrate of protein kinases in eukaryote ribosomes. The phosphorylation is stimulated by growth factors, tumor promoting agents, and mitogens. It is dephosphorylated at growth arrest.

It is found in the cytoplasm. The protein localises to the nucleus. The protein resides in the nucleolus. Its function is as follows. Component of the 40S small ribosomal subunit. Plays an important role in controlling cell growth and proliferation through the selective translation of particular classes of mRNA. Part of the small subunit (SSU) processome, first precursor of the small eukaryotic ribosomal subunit. During the assembly of the SSU processome in the nucleolus, many ribosome biogenesis factors, an RNA chaperone and ribosomal proteins associate with the nascent pre-rRNA and work in concert to generate RNA folding, modifications, rearrangements and cleavage as well as targeted degradation of pre-ribosomal RNA by the RNA exosome. This Drosophila melanogaster (Fruit fly) protein is Small ribosomal subunit protein eS6 (RpS6).